Reading from the N-terminus, the 349-residue chain is D-alanine--D-alanine ligase (349 aa).

The ATP-grasp domain occupies 132 to 335 (KHVFEAVGVP…YSDLIEKLVD (204 aa)). Position 162–217 (162–217 (VEKLEFPVFVKPANMGSSVGISKVDDLADLQPALSEAYKYDNRVVIEQGVDAREIE)) interacts with ATP. Residues D289, E302, and N304 each coordinate Mg(2+).

The protein belongs to the D-alanine--D-alanine ligase family. The cofactor is Mg(2+). Requires Mn(2+) as cofactor.

Its subcellular location is the cytoplasm. It catalyses the reaction 2 D-alanine + ATP = D-alanyl-D-alanine + ADP + phosphate + H(+). Its pathway is cell wall biogenesis; peptidoglycan biosynthesis. In terms of biological role, cell wall formation. The polypeptide is D-alanine--D-alanine ligase (Lactococcus lactis subsp. lactis (strain IL1403) (Streptococcus lactis)).